Here is a 181-residue protein sequence, read N- to C-terminus: uncharacterized protein (181 aa).

This is an uncharacterized protein from Sinorhizobium fredii (strain NBRC 101917 / NGR234).